The following is a 171-amino-acid chain: MFRTEDSILPPLEWLSDNNSSVPPAIYDWLMELGSMTLRFERYCTRVHVEPRHEYFIARNELKEEAEHLPESSLYWLREVVLMGDNQPWLLGRTVIPQETLAHHSNALMNLGTLPLGRYLFSNGELTRDYIHIGRKDSLWARRSRLRLSGKPLLLTELFLADSPLYTEDPS.

4 residues coordinate substrate: M36, R78, L116, and E157.

The protein belongs to the UbiC family.

The protein resides in the cytoplasm. The enzyme catalyses chorismate = 4-hydroxybenzoate + pyruvate. It functions in the pathway cofactor biosynthesis; ubiquinone biosynthesis. Its function is as follows. Removes the pyruvyl group from chorismate, with concomitant aromatization of the ring, to provide 4-hydroxybenzoate (4HB) for the ubiquinone pathway. The chain is Probable chorismate pyruvate-lyase from Bartonella bacilliformis (strain ATCC 35685 / KC583 / Herrer 020/F12,63).